A 1374-amino-acid polypeptide reads, in one-letter code: Probable ATP-dependent RNA helicase spindle-E (1374 aa).

A Helicase ATP-binding domain is found at 46-212 (LARIRENPVI…FKTPKKVGYL (167 aa)). 59-66 (GPTGCGKT) contributes to the ATP binding site. The DEAH box motif lies at 158 to 161 (DEIH). Residues 265–447 (VCDRLIENMH…NVILKAKLLE (183 aa)) enclose the Helicase C-terminal domain. In terms of domain architecture, Tudor spans 866–931 (QFAVGQMVAA…RKLDGPLAYM (66 aa)).

This sequence belongs to the DEAD box helicase family. DEAH subfamily.

The protein localises to the cytoplasm. It carries out the reaction ATP + H2O = ADP + phosphate + H(+). Probable ATP-binding RNA helicase which plays a central role during gametogenesis by repressing transposable elements and preventing their mobilization, which is essential for the germline integrity. Acts via the piRNA metabolic process, which mediates the repression of transposable elements during meiosis by forming complexes composed of piRNAs and Piwi proteins and govern the methylation and subsequent repression of transposons. The chain is Probable ATP-dependent RNA helicase spindle-E (spn-E) from Aedes aegypti (Yellowfever mosquito).